A 391-amino-acid polypeptide reads, in one-letter code: Chorismate synthase (391 aa).

Position 48 (R48) interacts with NADP(+). FMN is bound by residues 126–128 (RAS), G286, 301–305 (KPTSS), and R328.

This sequence belongs to the chorismate synthase family. The cofactor is FMNH2.

The enzyme catalyses 5-O-(1-carboxyvinyl)-3-phosphoshikimate = chorismate + phosphate. The protein operates within metabolic intermediate biosynthesis; chorismate biosynthesis; chorismate from D-erythrose 4-phosphate and phosphoenolpyruvate: step 7/7. In terms of biological role, catalyzes the anti-1,4-elimination of the C-3 phosphate and the C-6 proR hydrogen from 5-enolpyruvylshikimate-3-phosphate (EPSP) to yield chorismate, which is the branch point compound that serves as the starting substrate for the three terminal pathways of aromatic amino acid biosynthesis. This reaction introduces a second double bond into the aromatic ring system. The protein is Chorismate synthase of Saccharolobus islandicus (strain L.S.2.15 / Lassen #1) (Sulfolobus islandicus).